A 450-amino-acid chain; its full sequence is UDP-N-acetylmuramoylalanine--D-glutamate ligase (450 aa).

Residue 115–121 (GTNGKTT) coordinates ATP.

This sequence belongs to the MurCDEF family.

The protein resides in the cytoplasm. It carries out the reaction UDP-N-acetyl-alpha-D-muramoyl-L-alanine + D-glutamate + ATP = UDP-N-acetyl-alpha-D-muramoyl-L-alanyl-D-glutamate + ADP + phosphate + H(+). It participates in cell wall biogenesis; peptidoglycan biosynthesis. Cell wall formation. Catalyzes the addition of glutamate to the nucleotide precursor UDP-N-acetylmuramoyl-L-alanine (UMA). In Caldanaerobacter subterraneus subsp. tengcongensis (strain DSM 15242 / JCM 11007 / NBRC 100824 / MB4) (Thermoanaerobacter tengcongensis), this protein is UDP-N-acetylmuramoylalanine--D-glutamate ligase.